The primary structure comprises 346 residues: Protein Rae1 (346 aa).

WD repeat units lie at residues 17–61, 64–105, 126–148, and 255–289; these read ASPP…ATVP, MKTM…VMQV, LMTG…PMMT, and VNDI…KLKS.

This sequence belongs to the WD repeat rae1 family. As to quaternary structure, interacts with hiw; the interaction with Rae1 may protect hiw from autophagy-mediated degradation. Interacts with Nup98-96. Head (at protein level).

The protein resides in the cytoplasm. The protein localises to the perinuclear region. Its subcellular location is the nucleus. It localises to the nucleus envelope. It is found in the chromosome. Its function is as follows. Probable component of the nuclear pore complex (NPC) which regulates the nuclear export of specific mRNAs and promotes cell cycle progression during mitosis and male meiosis. Acts with Nup98-96 to promote the nuclear export of specific mRNAs such as Moe, however it does not appear to be required for general nuclear mRNA transport. Essential mitotic and male meiotic cell cycle regulator with roles in many aspects of the cell cycle including chromatin organization and condensation, spindle assembly, chromosome segregation, and maintaining nuclear structure. During male meiosis it is required for completion of meiosis I, as well as accurate cytokinesis of the secondary spermatocytes, and postmeiotic differentiation of spermatids. Acts as a downstream regulatory target of the Hippo/SWH (Sav/Wts/Hpo) signaling pathway to promote mitotic cell cycle progression and proliferation during wing and eye development, and thereby plays a key role in integrating the regulation of proliferation with organ size control. When the Hippo/SWH signaling pathway is inactive, Rae1 acts independently of yki to increase organ size by promoting mitotic S-phase entry and increase cellular proliferation. When the Hippo/SWH signaling pathway is active it inhibits the activity of Rae1 in a Wts-dependent manner to restrict organ growth. However, Rae1 is also able to negatively regulate the levels and activity of yki likely by activating the core kinases of the Hippo/SWH signaling pathway hpo and Wts and increasing the protein levels of hpo, Mer and Wts; it is therefore likely that it functions as part of a negative feedback loop with the Hippo/SWH signaling pathway to regulate pathway homeostasis and prevent organ overgrowth. Promotes mitotic cell cycle progression, at least in part, by increasing the accumulation of mitotic cyclins such as CycB, possibly by directly up-regulating cyclin transcripts or by inhibiting the anaphase promoting complex/cyclosome (APC/C) activator fzy. Also required in presynaptic, postmitotic motor neurons to restrain synaptic terminal growth. Promotes the expression and stability of the an E3 ubiquitin ligase of hiw, and is likely to function in the regulation of synaptic growth by binding to hiw and protecting it from autophagy-mediated degradation. This Drosophila melanogaster (Fruit fly) protein is Protein Rae1.